A 125-amino-acid polypeptide reads, in one-letter code: Holo-[acyl-carrier-protein] synthase (125 aa).

Mg(2+) is bound by residues aspartate 8 and glutamate 57.

This sequence belongs to the P-Pant transferase superfamily. AcpS family. Requires Mg(2+) as cofactor.

The protein localises to the cytoplasm. It carries out the reaction apo-[ACP] + CoA = holo-[ACP] + adenosine 3',5'-bisphosphate + H(+). Its function is as follows. Transfers the 4'-phosphopantetheine moiety from coenzyme A to a Ser of acyl-carrier-protein. The sequence is that of Holo-[acyl-carrier-protein] synthase from Neisseria gonorrhoeae (strain ATCC 700825 / FA 1090).